A 395-amino-acid chain; its full sequence is Indoleacetate--lysine synthetase (395 aa).

This sequence belongs to the ATP-dependent AMP-binding enzyme family.

The catalysed reaction is (indol-3-yl)acetate + L-lysine + ATP = N(6)-[(indole-3-yl)acetyl]-L-lysine + ADP + phosphate + H(+). Conversion of IAA to IAA-lysine. In Pseudomonas savastanoi (Pseudomonas syringae pv. savastanoi), this protein is Indoleacetate--lysine synthetase (iaaL).